The primary structure comprises 169 residues: Der GTPase-activating protein YihI (169 aa).

2 disordered regions span residues 1 to 92 (MKPS…EKPM) and 146 to 169 (SYDDDEEEEEDEKQEDMMRLLRGN). Positions 10 to 19 (SKGHAKARRK) are enriched in basic residues. Residues 20 to 30 (TREELDQEARD) are compositionally biased toward basic and acidic residues. The span at 31-40 (RKRQKKRRGH) shows a compositional bias: basic residues. Residues 49-58 (GNTTSGSKGQ) are compositionally biased toward polar residues. The span at 147–159 (YDDDEEEEEDEKQ) shows a compositional bias: acidic residues. A compositionally biased stretch (basic and acidic residues) spans 160 to 169 (EDMMRLLRGN).

Belongs to the YihI family. Interacts with Der.

A GTPase-activating protein (GAP) that modifies Der/EngA GTPase function. May play a role in ribosome biogenesis. The protein is Der GTPase-activating protein YihI of Escherichia coli O1:K1 / APEC.